Reading from the N-terminus, the 370-residue chain is UDP-N-acetylglucosamine--N-acetylmuramyl-(pentapeptide) pyrophosphoryl-undecaprenol N-acetylglucosamine transferase (370 aa).

UDP-N-acetyl-alpha-D-glucosamine-binding positions include 10–12 (TGG), N124, S196, I253, and Q298.

This sequence belongs to the glycosyltransferase 28 family. MurG subfamily.

The protein resides in the cell membrane. It catalyses the reaction Mur2Ac(oyl-L-Ala-gamma-D-Glu-L-Lys-D-Ala-D-Ala)-di-trans,octa-cis-undecaprenyl diphosphate + UDP-N-acetyl-alpha-D-glucosamine = beta-D-GlcNAc-(1-&gt;4)-Mur2Ac(oyl-L-Ala-gamma-D-Glu-L-Lys-D-Ala-D-Ala)-di-trans,octa-cis-undecaprenyl diphosphate + UDP + H(+). The protein operates within cell wall biogenesis; peptidoglycan biosynthesis. In terms of biological role, cell wall formation. Catalyzes the transfer of a GlcNAc subunit on undecaprenyl-pyrophosphoryl-MurNAc-pentapeptide (lipid intermediate I) to form undecaprenyl-pyrophosphoryl-MurNAc-(pentapeptide)GlcNAc (lipid intermediate II). This Limosilactobacillus reuteri subsp. reuteri (strain JCM 1112) (Lactobacillus reuteri) protein is UDP-N-acetylglucosamine--N-acetylmuramyl-(pentapeptide) pyrophosphoryl-undecaprenol N-acetylglucosamine transferase.